The following is a 402-amino-acid chain: Formate-dependent phosphoribosylglycinamide formyltransferase (402 aa).

Residues 23-24 (EL) and glutamate 83 each bind N(1)-(5-phospho-beta-D-ribosyl)glycinamide. ATP-binding positions include arginine 115, lysine 156, 196-199 (EEFV), and glutamate 204. The ATP-grasp domain occupies 120–316 (RLAAEKVGVP…EFAIHARAVL (197 aa)). Positions 274 and 287 each coordinate Mg(2+). N(1)-(5-phospho-beta-D-ribosyl)glycinamide is bound by residues aspartate 294, lysine 364, and 371–372 (RR).

This sequence belongs to the PurK/PurT family. Homodimer.

The catalysed reaction is N(1)-(5-phospho-beta-D-ribosyl)glycinamide + formate + ATP = N(2)-formyl-N(1)-(5-phospho-beta-D-ribosyl)glycinamide + ADP + phosphate + H(+). It participates in purine metabolism; IMP biosynthesis via de novo pathway; N(2)-formyl-N(1)-(5-phospho-D-ribosyl)glycinamide from N(1)-(5-phospho-D-ribosyl)glycinamide (formate route): step 1/1. Its function is as follows. Involved in the de novo purine biosynthesis. Catalyzes the transfer of formate to 5-phospho-ribosyl-glycinamide (GAR), producing 5-phospho-ribosyl-N-formylglycinamide (FGAR). Formate is provided by PurU via hydrolysis of 10-formyl-tetrahydrofolate. The protein is Formate-dependent phosphoribosylglycinamide formyltransferase of Ignicoccus hospitalis (strain KIN4/I / DSM 18386 / JCM 14125).